Reading from the N-terminus, the 273-residue chain is MSGDKLLSELGYKLGRTIGEGSYSKVKVATSKKYKGTVAIKVVDRRRAPPDFVNKFLPRELSILRGVRHPHIVHVFEFIEVCNGKLYIVMEAAATDLLQAVQRNGRIPGVQARDLFAQIAGAVRYLHDHHLVHRDLKCENVLLSPDERRVKLTDFGFGRQAHGYPDLSTTYCGSAAYASPEVLLGIPYDPKKYDVWSMGVVLYVMVTGCMPFDDSDIAGLPRRQKRGVLYPEGLELSERCKALIAELLQFSPSARPSAGQVARNCWLRAGDSG.

The region spanning Tyr-12 to Leu-267 is the Protein kinase domain. ATP is bound by residues Ile-18–Val-26 and Lys-41. Residue Asp-135 is the Proton acceptor of the active site.

It belongs to the protein kinase superfamily. CAMK Ser/Thr protein kinase family. In terms of assembly, microtubule inner protein component of sperm flagellar doublet microtubules. Interacts with HSP90; this interaction stabilizes and activates TSSK6. Interacts with the heat shock proteins HSPCB, HSPA8 and HSPA1A. These interactions appear to be required for TSSK6 kinase activity. Interacts with TSACC; this interaction is direct and recruits TSACC to HSP90, which is essential for kinase activity. Mg(2+) serves as cofactor. In terms of processing, autophosphorylated. Ubiquitinated; HSP90 activity negatively regulates ubiquitination and degradation. In terms of tissue distribution, highly expressed in testis. Expressed at lower levels in colon, small intestine, ovary, prostate, thymus, spleen and peripheral blood leukocytes.

Its subcellular location is the cytoplasm. The protein resides in the cytoskeleton. The protein localises to the flagellum axoneme. It is found in the nucleus. It catalyses the reaction L-seryl-[protein] + ATP = O-phospho-L-seryl-[protein] + ADP + H(+). The catalysed reaction is L-threonyl-[protein] + ATP = O-phospho-L-threonyl-[protein] + ADP + H(+). Functionally, serine/threonine-protein kinase component of the sperm flagellar doublet microtubules. May act as a regulator of sperm motility by mediating phosphorylation of sperm doublet microtubule proteins. Plays a role in DNA condensation during postmeiotic chromatin remodeling and histone-to-protamine transition during spermatogenesis. The sequence is that of Testis-specific serine/threonine-protein kinase 6 from Homo sapiens (Human).